The following is a 353-amino-acid chain: Trans-enoyl reductase eqxC (353 aa).

45-48 (VDTK) contributes to the NADP(+) binding site. A substrate-binding site is contributed by 131-138 (ISFMTTGL). Residues 166–169 (SSAT), 189–192 (SPRN), Tyr207, and 254–255 (LE) contribute to the NADP(+) site. 275 to 279 (GPQML) serves as a coordination point for substrate. Residue 344–345 (IS) coordinates NADP(+).

The protein belongs to the zinc-containing alcohol dehydrogenase family. As to quaternary structure, monomer.

The catalysed reaction is L-serine + 7 malonyl-CoA + acetyl-CoA + 2 S-adenosyl-L-methionine + ATP + 8 NADPH + 11 H(+) = (5S)-3-[(2E,6R,8E,10E,12E)-2,6-dimethyltetradeca-2,8,10,12-tetraenoyl]-5-(hydroxymethyl)pyrrolidine-2,4-dione + AMP + 2 S-adenosyl-L-homocysteine + 7 CO2 + diphosphate + 8 NADP(+) + 8 CoA + 6 H2O. Its pathway is mycotoxin biosynthesis. Trans-enoyl reductase; part of the gene cluster that mediates the biosynthesis of equisetin, a trans-fused decalin-containing tetramic acid with antimicrobial activity. The PKS module of eqxS together with the enoylreductase eqxC catalyze the formation of the polyketide unit which is then conjugated to L-serine by the condensation domain of the eqxS NRPS module. Activity of the Dieckmann cyclase domain (RED) results in release of the Dieckmann product intermediate. Diels-Alderase eqx3 is involved in endo-selective Diels-Alder cycloaddition to form the decalin ring, leading to the production of N-desmethylequisetin also called trichosetin. Subsequent N-methylation is carried out by eqxD to give equisetin. In Fusarium heterosporum, this protein is Trans-enoyl reductase eqxC.